The chain runs to 267 residues: Hydroxyethylthiazole kinase (267 aa).

Position 46 (Met46) interacts with substrate. ATP is bound by residues Arg121 and Thr167. Position 194 (Ala194) interacts with substrate.

Belongs to the Thz kinase family. Requires Mg(2+) as cofactor.

The catalysed reaction is 5-(2-hydroxyethyl)-4-methylthiazole + ATP = 4-methyl-5-(2-phosphooxyethyl)-thiazole + ADP + H(+). Its pathway is cofactor biosynthesis; thiamine diphosphate biosynthesis; 4-methyl-5-(2-phosphoethyl)-thiazole from 5-(2-hydroxyethyl)-4-methylthiazole: step 1/1. In terms of biological role, catalyzes the phosphorylation of the hydroxyl group of 4-methyl-5-beta-hydroxyethylthiazole (THZ). The protein is Hydroxyethylthiazole kinase of Rhizobium johnstonii (strain DSM 114642 / LMG 32736 / 3841) (Rhizobium leguminosarum bv. viciae).